Here is a 120-residue protein sequence, read N- to C-terminus: NAD(P)H-quinone oxidoreductase subunit 3, chloroplastic (120 aa).

A run of 3 helical transmembrane segments spans residues 9–29, 64–84, and 88–108; these read IFWA…LISG, MFAL…PWAM, and VLGV…IVGS.

The protein belongs to the complex I subunit 3 family. As to quaternary structure, NDH is composed of at least 16 different subunits, 5 of which are encoded in the nucleus.

The protein resides in the plastid. It localises to the chloroplast thylakoid membrane. The enzyme catalyses a plastoquinone + NADH + (n+1) H(+)(in) = a plastoquinol + NAD(+) + n H(+)(out). The catalysed reaction is a plastoquinone + NADPH + (n+1) H(+)(in) = a plastoquinol + NADP(+) + n H(+)(out). NDH shuttles electrons from NAD(P)H:plastoquinone, via FMN and iron-sulfur (Fe-S) centers, to quinones in the photosynthetic chain and possibly in a chloroplast respiratory chain. The immediate electron acceptor for the enzyme in this species is believed to be plastoquinone. Couples the redox reaction to proton translocation, and thus conserves the redox energy in a proton gradient. In Gossypium hirsutum (Upland cotton), this protein is NAD(P)H-quinone oxidoreductase subunit 3, chloroplastic.